The following is a 484-amino-acid chain: Maintenance of mitochondrial morphology protein 1 (484 aa).

At 1 to 22 the chain is on the lumenal side; the sequence is MSFQQSETVPVPAQSSLSFTQG. The helical transmembrane segment at 23-43 threads the bilayer; that stretch reads FLLGQLSVVLLIGAFIKFFIF. Topologically, residues 44–484 are cytoplasmic; the sequence is GEAPPPPSRG…PGSLSGAAAR (441 aa). Disordered stretches follow at residues 50-98, 272-319, and 388-484; these read PSRG…SSST, STPP…TGSP, and RTGV…AAAR. Basic residues predominate over residues 54–64; the sequence is LSHRASTHRRS. Polar residues-rich tracts occupy residues 65 to 78 and 85 to 98; these read NSIY…ANNR and SNSN…SSST. The 251-residue stretch at 130–380 folds into the SMP-LTD domain; it reads QPESLDWFNV…EPRVQVVGLP (251 aa). The span at 272 to 286 shows a compositional bias: pro residues; it reads STPPLHTPSPSPSPP. The span at 399-408 shows a compositional bias: polar residues; it reads TGSNAASRSA. The span at 413-427 shows a compositional bias: basic and acidic residues; sequence LGDHHLGDREPEGLR. Composition is skewed to polar residues over residues 437 to 449 and 466 to 476; these read QFDS…SYNV and GALSEQFQMPG.

This sequence belongs to the MMM1 family. In terms of assembly, homodimer. Component of the ER-mitochondria encounter structure (ERMES) or MDM complex, composed of mmm1, mdm10, mdm12 and mdm34. A mmm1 homodimer associates with one molecule of mdm12 on each side in a pairwise head-to-tail manner, and the SMP-LTD domains of mmm1 and mdm12 generate a continuous hydrophobic tunnel for phospholipid trafficking.

It is found in the endoplasmic reticulum membrane. In terms of biological role, component of the ERMES/MDM complex, which serves as a molecular tether to connect the endoplasmic reticulum (ER) and mitochondria. Components of this complex are involved in the control of mitochondrial shape and protein biogenesis, and function in nonvesicular lipid trafficking between the ER and mitochondria. The mdm12-mmm1 subcomplex functions in the major beta-barrel assembly pathway that is responsible for biogenesis of all outer membrane beta-barrel proteins, and acts in a late step after the SAM complex. The mdm10-mdm12-mmm1 subcomplex further acts in the TOM40-specific pathway after the action of the mdm12-mmm1 complex. Essential for establishing and maintaining the structure of mitochondria and maintenance of mtDNA nucleoids. The sequence is that of Maintenance of mitochondrial morphology protein 1 from Aspergillus niger (strain ATCC MYA-4892 / CBS 513.88 / FGSC A1513).